Reading from the N-terminus, the 102-residue chain is COX assembly mitochondrial protein 2 homolog (102 aa).

The CHCH domain occupies 11–55 (TKECNMLIEFLQRCHSEKPIGKMIGKCSYWDEAVWQCTKKERIWR). 2 consecutive short sequence motifs (cx9C motif) follow at residues 14–24 (CNMLIEFLQRC) and 37–47 (CSYWDEAVWQC). 2 disulfides stabilise this stretch: Cys-14–Cys-47 and Cys-24–Cys-37.

This sequence belongs to the CMC family.

The protein resides in the mitochondrion. Functionally, may be involved in cytochrome c oxidase biogenesis. This is COX assembly mitochondrial protein 2 homolog from Caenorhabditis elegans.